A 351-amino-acid chain; its full sequence is CREB homolog crh-2 (351 aa).

Disordered regions lie at residues 46–104 (EPCT…EPLG) and 119–149 (SPSA…HQQQ). Positions 82-95 (GSSSGSPSSSLSSP) are enriched in low complexity. The 64-residue stretch at 282–345 (SLKIVRRKIK…RDLQQKLHQY (64 aa)) folds into the bZIP domain. The interval 284–304 (KIVRRKIKNKLSAQESRRKRK) is basic motif. Positions 307-314 (IDALEGRL) are leucine-zipper.

It belongs to the bZIP family.

Its subcellular location is the nucleus. Its function is as follows. Transcription factor. Plays a role in regulating the developmentally arrested larval state known as dauer, when induced by long-term exposure to the Gram-negative bacterium P.aeruginosa PAO1, but dispensable for dauer formation induced by starvation. Involved in regulating expression of microRNA mir-243, during long-term exposure to P.aeruginosa PAO1. This chain is CREB homolog crh-2, found in Caenorhabditis elegans.